Consider the following 1034-residue polypeptide: MGKAENYELYSVELGSGPGGDMTAKMSKKKAGGGGGKKKEKLENMKKEMEINDHQLSVSELEQKYQTSATKGLKASLAAELLLRDGPNALRPPRGTPEYVKFARQLAGGLQCLMWVAAAICLIAFAIQASEGDLTTDDNLYLAVALIAVVVVTGCFGYYQEFKSTNIIASFKNLVPQQATVIRDGDKFQINADQLVVGDLVEMKGGDRVPADIRILSAQGCKVDNSSLTGESEPQTRSPECTHESPLETRNIAFFSTMCLEGTAQGLVVSTGDRTIIGRIASLASGVENEKTPIAIEIEHFVDIIAGLAILFGATFFVVAMCIGYTFLRAMVFFMAIVVAYVPEGLLATVTVCLSLTAKRLASKNCVVKNLEAVETLGSTSVICSDKTGTLTQNRMTVSHLWFDNHIHTADTTEDQSGQTFDQSSETWRALCRVLTLCNRAAFKSGQDAVPVPKRIVIGDASETALLKFSELTLGNAMGYRDRFPKVCEIPFNSINKFQLSIHTLEDPRDSRHLLVMKGAPERVLERCSSILIKGQELPLDEQWREAFQTAYLSLGGLGERVLGFCQLYLNEKDYPPGYAFDVEAMNFPSSGLCFAGLVSMIDPPRATVPDAVLKCRTAGIRVIMVTGDHPITAKAIAASVGIISEGSETVEDIAARLRMPVDQVNRKDARACVINGMQLKDMDPSELVEALRTHPEMVFARTSPQQKLVIVESCQRLGAIVAVTGDGVNDSPALKKADIGVAMGIAGSDAAKNAADMILLDDNFASIVTGVEQGRLIFDNLKKSIAYTLTKNIPELTPYLIYITVSVPLPLGCITILFIELCTDIFPSVSLAYEKAESDIMHLRPRNPKRDRLVNEPLAAYSYFQIGAIQSFAGFADYFTAMAQEGWFPLLCVGLRPQWEDHHLQDLQDSYGQEWTFGQRLYQQYTCYTVFFISIEMCQIADVLIRKTRRLSVFQQGFFRNKILVIAIVFQVCIGCFLCYCPGMPNIFNFMPIRFQWWLVPMPFGLLIFVYDEIRKLGVRCCPGSWWDQELYY.

At 1-97 (MGKAENYELY…NALRPPRGTP (97 aa)) the chain is on the cytoplasmic side. 2 positions are modified to phosphotyrosine: Y7 and Y10. The segment at 14–41 (LGSGPGGDMTAKMSKKKAGGGGGKKKEK) is disordered. Basic residues predominate over residues 26-39 (MSKKKAGGGGGKKK). S27 is subject to Phosphoserine. The chain crosses the membrane as a helical span at residues 98 to 118 (EYVKFARQLAGGLQCLMWVAA). The Lumenal portion of the chain corresponds to 119–141 (AICLIAFAIQASEGDLTTDDNLY). The chain crosses the membrane as a helical span at residues 142–162 (LAVALIAVVVVTGCFGYYQEF). Residues 163-298 (KSTNIIASFK…NEKTPIAIEI (136 aa)) lie on the Cytoplasmic side of the membrane. A helical membrane pass occupies residues 299–318 (EHFVDIIAGLAILFGATFFV). Over 319-330 (VAMCIGYTFLRA) the chain is Lumenal. A helical transmembrane segment spans residues 331-348 (MVFFMAIVVAYVPEGLLA). V339, A340, V342, and E344 together coordinate K(+). Residues 349–782 (TVTVCLSLTA…EQGRLIFDNL (434 aa)) are Cytoplasmic-facing. D386 serves as the catalytic 4-aspartylphosphate intermediate. The Mg(2+) site is built by D386 and T388. A phosphoserine mark is found at S462 and S600. 2 residues coordinate Mg(2+): D727 and D731. A helical transmembrane segment spans residues 783-802 (KKSIAYTLTKNIPELTPYLI). K(+) is bound at residue E796. Residues 803–812 (YITVSVPLPL) are Lumenal-facing. A helical transmembrane segment spans residues 813-833 (GCITILFIELCTDIFPSVSLA). K(+) is bound at residue E821. Topologically, residues 834–853 (YEKAESDIMHLRPRNPKRDR) are cytoplasmic. S839 is modified (phosphoserine). The helical transmembrane segment at 854–876 (LVNEPLAAYSYFQIGAIQSFAGF) threads the bilayer. Over 877-928 (ADYFTAMAQEGWFPLLCVGLRPQWEDHHLQDLQDSYGQEWTFGQRLYQQYTC) the chain is Lumenal. The chain crosses the membrane as a helical span at residues 929–948 (YTVFFISIEMCQIADVLIRK). At 949 to 962 (TRRLSVFQQGFFRN) the chain is on the cytoplasmic side. Position 953 is a phosphoserine; by PKA (S953). A helical membrane pass occupies residues 963 to 981 (KILVIAIVFQVCIGCFLCY). Residues 982–996 (CPGMPNIFNFMPIRF) are Lumenal-facing. Residues 997–1017 (QWWLVPMPFGLLIFVYDEIRK) form a helical membrane-spanning segment. Over 1018–1034 (LGVRCCPGSWWDQELYY) the chain is Cytoplasmic.

It belongs to the cation transport ATPase (P-type) (TC 3.A.3) family. Type IIC subfamily. The gastric H(+)/K(+) ATPase pump is composed of the catalytic alpha subunit ATP4A and the regulatory beta subunit ATP4B. Interacts (via the P-domain) with ATP4B (via N-terminus); this interaction stabilizes the lumenal-open E2 conformation state and prevents the reverse reaction of the transport cycle. In terms of tissue distribution, expressed in parietal cells (at protein level).

The protein resides in the apical cell membrane. The enzyme catalyses K(+)(out) + ATP + H2O + H(+)(in) = K(+)(in) + ADP + phosphate + 2 H(+)(out). Its function is as follows. The catalytic subunit of the gastric H(+)/K(+) ATPase pump which transports H(+) ions in exchange for K(+) ions across the apical membrane of parietal cells. Uses ATP as an energy source to pump H(+) ions to the gastric lumen while transporting K(+) ion from the lumen into the cell. Remarkably generates a million-fold proton gradient across the gastric parietal cell membrane, acidifying the gastric juice down to pH 1. Within a transport cycle, the transfer of a H(+) ion across the membrane is coupled to ATP hydrolysis and is associated with a transient phosphorylation that shifts the pump conformation from inward-facing (E1) to outward-facing state (E2). The release of the H(+) ion in the stomach lumen is followed by binding of K(+) ion converting the pump conformation back to the E1 state. This chain is Potassium-transporting ATPase alpha chain 1, found in Mus musculus (Mouse).